The following is a 207-amino-acid chain: LysM and putative peptidoglycan-binding domain-containing protein 2 (207 aa).

A LysM domain is found at I61–I105. Residues A186–H207 are disordered. Residues R188–S199 show a composition bias toward basic and acidic residues.

The polypeptide is LysM and putative peptidoglycan-binding domain-containing protein 2 (lysmd2) (Xenopus tropicalis (Western clawed frog)).